We begin with the raw amino-acid sequence, 145 residues long: Large ribosomal subunit protein uL11 (145 aa).

Belongs to the universal ribosomal protein uL11 family. Part of the ribosomal stalk of the 50S ribosomal subunit. Interacts with L10 and the large rRNA to form the base of the stalk. L10 forms an elongated spine to which L12 dimers bind in a sequential fashion forming a multimeric L10(L12)X complex. Post-translationally, one or more lysine residues are methylated.

Forms part of the ribosomal stalk which helps the ribosome interact with GTP-bound translation factors. The sequence is that of Large ribosomal subunit protein uL11 from Rickettsia peacockii (strain Rustic).